A 251-amino-acid polypeptide reads, in one-letter code: Segregation and condensation protein A (251 aa).

Belongs to the ScpA family. In terms of assembly, component of a cohesin-like complex composed of ScpA, ScpB and the Smc homodimer, in which ScpA and ScpB bind to the head domain of Smc. The presence of the three proteins is required for the association of the complex with DNA.

The protein localises to the cytoplasm. Functionally, participates in chromosomal partition during cell division. May act via the formation of a condensin-like complex containing Smc and ScpB that pull DNA away from mid-cell into both cell halves. The polypeptide is Segregation and condensation protein A (Clostridium botulinum (strain Alaska E43 / Type E3)).